A 153-amino-acid polypeptide reads, in one-letter code: Small ribosomal subunit protein uS12m (153 aa).

Residues 1 to 20 constitute a mitochondrion transit peptide; that stretch reads MLSRFMSNTWCTPLRQAQRL.

The protein belongs to the universal ribosomal protein uS12 family. As to quaternary structure, component of the mitochondrial small ribosomal subunit (mt-SSU). Mature yeast 74S mitochondrial ribosomes consist of a small (37S) and a large (54S) subunit. The 37S small subunit contains a 15S ribosomal RNA (15S mt-rRNA) and 34 different proteins. The 54S large subunit contains a 21S rRNA (21S mt-rRNA) and 46 different proteins. uS12m forms part of the decoding center of the mt-SSU.

It localises to the mitochondrion. In terms of biological role, component of the mitochondrial ribosome (mitoribosome), a dedicated translation machinery responsible for the synthesis of mitochondrial genome-encoded proteins, including at least some of the essential transmembrane subunits of the mitochondrial respiratory chain. The mitoribosomes are attached to the mitochondrial inner membrane and translation products are cotranslationally integrated into the membrane. uS12m is required for respiratory growth. This chain is Small ribosomal subunit protein uS12m (MRPS12), found in Saccharomyces cerevisiae (strain ATCC 204508 / S288c) (Baker's yeast).